Consider the following 63-residue polypeptide: Crotasin (63 aa).

An N-terminal signal peptide occupies residues Met1 to Ala22. 3 cysteine pairs are disulfide-bonded: Cys26/Cys56, Cys33/Cys50, and Cys38/Cys57.

Highly expressed in pancreas, heart, liver, brain and kidney. Expressed to a low extent in the venom gland.

It is found in the secreted. The sequence is that of Crotasin from Crotalus durissus terrificus (South American rattlesnake).